Reading from the N-terminus, the 148-residue chain is Large ribosomal subunit protein bL9 (148 aa).

It belongs to the bacterial ribosomal protein bL9 family.

Binds to the 23S rRNA. The protein is Large ribosomal subunit protein bL9 of Salinispora arenicola (strain CNS-205).